We begin with the raw amino-acid sequence, 275 residues long: Large ribosomal subunit protein uL2 (275 aa).

Positions 28 to 38 are enriched in basic and acidic residues; it reads EPYAPLLDKKS. Disordered regions lie at residues 28 to 55 and 224 to 258; these read EPYA…RHVG and AMNP…GYKT.

It belongs to the universal ribosomal protein uL2 family. In terms of assembly, part of the 50S ribosomal subunit. Forms a bridge to the 30S subunit in the 70S ribosome.

Its function is as follows. One of the primary rRNA binding proteins. Required for association of the 30S and 50S subunits to form the 70S ribosome, for tRNA binding and peptide bond formation. It has been suggested to have peptidyltransferase activity; this is somewhat controversial. Makes several contacts with the 16S rRNA in the 70S ribosome. The sequence is that of Large ribosomal subunit protein uL2 from Cellvibrio japonicus (strain Ueda107) (Pseudomonas fluorescens subsp. cellulosa).